A 20-amino-acid chain; its full sequence is Cytochrome c oxidase subunit 6A1, mitochondrial (20 aa).

The protein belongs to the cytochrome c oxidase subunit 6A family. In terms of assembly, component of the cytochrome c oxidase (complex IV, CIV), a multisubunit enzyme composed of 14 subunits. The complex is composed of a catalytic core of 3 subunits MT-CO1, MT-CO2 and MT-CO3, encoded in the mitochondrial DNA, and 11 supernumerary subunits COX4I, COX5A, COX5B, COX6A, COX6B, COX6C, COX7A, COX7B, COX7C, COX8 and NDUFA4, which are encoded in the nuclear genome. The complex exists as a monomer or a dimer and forms supercomplexes (SCs) in the inner mitochondrial membrane with NADH-ubiquinone oxidoreductase (complex I, CI) and ubiquinol-cytochrome c oxidoreductase (cytochrome b-c1 complex, complex III, CIII), resulting in different assemblies (supercomplex SCI(1)III(2)IV(1) and megacomplex MCI(2)III(2)IV(2)). In terms of tissue distribution, liver specific isoform.

It localises to the mitochondrion inner membrane. It functions in the pathway energy metabolism; oxidative phosphorylation. Its function is as follows. Component of the cytochrome c oxidase, the last enzyme in the mitochondrial electron transport chain which drives oxidative phosphorylation. The respiratory chain contains 3 multisubunit complexes succinate dehydrogenase (complex II, CII), ubiquinol-cytochrome c oxidoreductase (cytochrome b-c1 complex, complex III, CIII) and cytochrome c oxidase (complex IV, CIV), that cooperate to transfer electrons derived from NADH and succinate to molecular oxygen, creating an electrochemical gradient over the inner membrane that drives transmembrane transport and the ATP synthase. Cytochrome c oxidase is the component of the respiratory chain that catalyzes the reduction of oxygen to water. Electrons originating from reduced cytochrome c in the intermembrane space (IMS) are transferred via the dinuclear copper A center (CU(A)) of subunit 2 and heme A of subunit 1 to the active site in subunit 1, a binuclear center (BNC) formed by heme A3 and copper B (CU(B)). The BNC reduces molecular oxygen to 2 water molecules unsing 4 electrons from cytochrome c in the IMS and 4 protons from the mitochondrial matrix. This chain is Cytochrome c oxidase subunit 6A1, mitochondrial (COX6A1), found in Ovis aries (Sheep).